We begin with the raw amino-acid sequence, 444 residues long: U-box domain-containing protein 31 (444 aa).

The U-box domain maps to 59–133 (EIPSVFICPI…YTWFSQKYVL (75 aa)). ARM repeat units follow at residues 301–340 (KQVR…SLCL) and 343–382 (EGRI…SVCK).

It catalyses the reaction S-ubiquitinyl-[E2 ubiquitin-conjugating enzyme]-L-cysteine + [acceptor protein]-L-lysine = [E2 ubiquitin-conjugating enzyme]-L-cysteine + N(6)-ubiquitinyl-[acceptor protein]-L-lysine.. It functions in the pathway protein modification; protein ubiquitination. In terms of biological role, functions as an E3 ubiquitin ligase. This chain is U-box domain-containing protein 31 (PUB31), found in Arabidopsis thaliana (Mouse-ear cress).